Consider the following 357-residue polypeptide: Dihydroorotate dehydrogenase (quinone) (357 aa).

FMN is bound by residues 67–71 (AGFDK) and T91. K71 contacts substrate. 116-120 (NRMGF) is a binding site for substrate. Residues N153 and N186 each contribute to the FMN site. N186 contacts substrate. S189 functions as the Nucleophile in the catalytic mechanism. A substrate-binding site is contributed by N191. The FMN site is built by K228 and T256. 257–258 (NT) provides a ligand contact to substrate. Residues G282, G311, and 332 to 333 (YT) contribute to the FMN site.

Belongs to the dihydroorotate dehydrogenase family. Type 2 subfamily. Monomer. Requires FMN as cofactor.

The protein resides in the cell membrane. It carries out the reaction (S)-dihydroorotate + a quinone = orotate + a quinol. It functions in the pathway pyrimidine metabolism; UMP biosynthesis via de novo pathway; orotate from (S)-dihydroorotate (quinone route): step 1/1. Its function is as follows. Catalyzes the conversion of dihydroorotate to orotate with quinone as electron acceptor. The chain is Dihydroorotate dehydrogenase (quinone) from Arthrobacter sp. (strain FB24).